The chain runs to 261 residues: 4-phosphopantoate--beta-alanine ligase (261 aa).

ATP is bound by residues R17, R39, 181–183 (DLN), 187–188 (RS), and 199–200 (NI).

It belongs to the archaeal phosphopantothenate synthetase family. As to quaternary structure, homodimer.

It carries out the reaction (R)-4-phosphopantoate + beta-alanine + ATP = (R)-4'-phosphopantothenate + AMP + diphosphate + H(+). It functions in the pathway cofactor biosynthesis; coenzyme A biosynthesis. Its activity is regulated as follows. Activity is not affected by 4'-phosphopantothenate or CoA/acetyl-CoA. Functionally, catalyzes the condensation of (R)-4-phosphopantoate and beta-alanine to 4'-phosphopantothenate in the CoA biosynthesis pathway. Cannot use (R)-pantoate as substrate and thus does not display pantothenate synthetase (PS) activity. Displays strict specificity for its natural substrates, 4-phosphopantoate, ATP and beta-alanine. The sequence is that of 4-phosphopantoate--beta-alanine ligase from Thermococcus kodakarensis (strain ATCC BAA-918 / JCM 12380 / KOD1) (Pyrococcus kodakaraensis (strain KOD1)).